Reading from the N-terminus, the 317-residue chain is WSCD family member AAEL009094 (317 aa).

A helical membrane pass occupies residues 8–28 (LFGLAGTILVYIGGILFLSFV). 3 N-linked (GlcNAc...) asparagine glycosylation sites follow: Asn-150, Asn-226, and Asn-232.

Belongs to the WSCD family.

It localises to the membrane. The protein is WSCD family member AAEL009094 of Aedes aegypti (Yellowfever mosquito).